The sequence spans 142 residues: Endoribonuclease YbeY (142 aa).

Zn(2+)-binding residues include His100, His104, and His110.

Belongs to the endoribonuclease YbeY family. It depends on Zn(2+) as a cofactor.

The protein localises to the cytoplasm. In terms of biological role, single strand-specific metallo-endoribonuclease involved in late-stage 70S ribosome quality control and in maturation of the 3' terminus of the 16S rRNA. In Helicobacter pylori (strain G27), this protein is Endoribonuclease YbeY.